The chain runs to 213 residues: Ras-related protein Rab-39B (213 aa).

Residues Ser17, Gly20, Lys21, Ser22, Cys23, Ser37, and Thr40 each contribute to the GTP site. Position 22 (Ser22) interacts with Mg(2+). Residues Gln35–Val43 form a switch-I region. The Mg(2+) site is built by Thr40 and Asp64. GTP contacts are provided by Gly67, His123, Lys124, Asp126, Ala154, and Arg155. Residues Gly67–Val83 are switch-II. Ser201 carries the post-translational modification Phosphoserine. S-geranylgeranyl cysteine attachment occurs at residues Cys211 and Cys213. Cys213 is modified (cysteine methyl ester).

It belongs to the small GTPase superfamily. Rab family. Interacts (GDP-bound) with C9orf72; C9orf72 in complex with SMCR8 acts as a GEF for RAB39B. Interacts (in GTP-bound form) with PICK1 (via PDZ domain); a PICK1 homodimer may allow simultaneous association of RAB39B and GRIA2 to PICK1 which is involved in GRIA2 trafficking. Interacts with isoform c of RASSF1; the interaction is strong. Interacts with isoform a of RASSF1; the interaction is weak. Interacts with the DLG4/PSD-95. Interacts (GTP-bound) with HOPS complex components VPS39 and VPS41. Mg(2+) serves as cofactor.

It is found in the cell membrane. The protein localises to the cytoplasmic vesicle membrane. The protein resides in the golgi apparatus. It localises to the cytoplasmic vesicle. Its subcellular location is the autophagosome membrane. It is found in the autolysosome membrane. The catalysed reaction is GTP + H2O = GDP + phosphate + H(+). Its activity is regulated as follows. Regulated by guanine nucleotide exchange factors (GEFs) including C9orf72-SMCR8 complex, which promote the exchange of bound GDP for free GTP. Regulated by GTPase activating proteins (GAPs) which increase the GTP hydrolysis activity. Inhibited by GDP dissociation inhibitors (GDIs). Its function is as follows. The small GTPases Rab are key regulators of intracellular membrane trafficking, from the formation of transport vesicles to their fusion with membranes. Rabs cycle between an inactive GDP-bound form and an active GTP-bound form that is able to recruit to membranes different sets of downstream effectors directly responsible for vesicle formation, movement, tethering and fusion. RAB39B is involved in autophagy and may function in autophagosome formation. Binds downstream effector PICK1 to ensure selectively GRIA2 exit from the endoplasmic reticulum to the Golgi and to regulate AMPAR composition at the post-synapses and thus synaptic transmission. May regulate the homeostasis of SNCA/alpha-synuclein. This is Ras-related protein Rab-39B (RAB39B) from Bos taurus (Bovine).